Consider the following 64-residue polypeptide: Purotoxin-2 (64 aa).

The segment at 1–44 is knottin domain; that stretch reads AKACTPLLHDCSHDRHSCCRGDMFKYVCDCFYPEGEDKTEVCSC. Disulfide bonds link C4–C19, C11–C28, C18–C44, and C30–C42. Positions 45-64 are linear cationic cytotoxin domain; it reads QQPKSHKIAEKIIDKAKTTL. The residue at position 64 (L64) is a Leucine amide.

It belongs to the neurotoxin 19 (CSTX) family. 05 (U4-Lctx) subfamily. In terms of processing, amidation at Leu-64 is not mandatory for activity on P2RX3. In terms of tissue distribution, expressed by the venom gland.

It localises to the secreted. In terms of biological role, enhances the high-affinity desensitization of human P2RX3 purinoceptors. At 50 nM, the toxin decreases the IC(50) for ambient ATP from 2.67 nM to 0.77 nM in human P2RX3. The polypeptide is Purotoxin-2 (Alopecosa marikovskyi (Wolf spider)).